We begin with the raw amino-acid sequence, 949 residues long: Leucine--tRNA ligase (949 aa).

Residues 68–79 carry the 'HIGH' region motif; that stretch reads PYPSGEGLHVGH. Positions 540-562 are disordered; it reads VPDYSPVSFDPDDAGSEPSPPLG. The 'KMSKS' region signature appears at 722–726; sequence KIGKS. Residue K725 coordinates ATP.

This sequence belongs to the class-I aminoacyl-tRNA synthetase family.

The protein localises to the cytoplasm. The enzyme catalyses tRNA(Leu) + L-leucine + ATP = L-leucyl-tRNA(Leu) + AMP + diphosphate. The sequence is that of Leucine--tRNA ligase from Mycolicibacterium gilvum (strain PYR-GCK) (Mycobacterium gilvum (strain PYR-GCK)).